Here is a 325-residue protein sequence, read N- to C-terminus: MTSGTRMPTWRERENNKRRERRRRAIAAKIFTGLRMYGNYELPKHCDNNEVLKALCNEAGWIVEPDGTTYRKGCSRPVERMEIGGGSATASPCSSYQPSPCASYNPSPGSSNFMSPASSSFANLTSGDGQSLIPWLKHLSTTSSSSASSSSRLPNYLYIPGGSISAPVTPPLSSPTARTPRMNTDWQQLNNSFFVSSTPPSPTRQIIPDSEWFSGIQLAQSVPASPTFSLVSQNPFGFKEEAASAAGGGGGSRMWTPGQSGTCSPAIPPGADQTADVPMSEAVAPPEFAFGSNTNGLVKAWEGERIHEESGSDDLELTLGNSSTR.

The tract at residues 1-21 (MTSGTRMPTWRERENNKRRER) is disordered. Residues 6 to 89 (RMPTWREREN…RMEIGGGSAT (84 aa)) are required for DNA-binding. Threonine 169 carries the post-translational modification Phosphothreonine. The interval 304–325 (ERIHEESGSDDLELTLGNSSTR) is disordered.

This sequence belongs to the BZR/LAT61 family. Phosphorylated. Phosphorylation increases protein degradation.

The chain is BES1/BZR1 homolog protein 4 (BEH4) from Arabidopsis thaliana (Mouse-ear cress).